We begin with the raw amino-acid sequence, 316 residues long: Erythritol catabolism regulatory protein EryD (316 aa).

The H-T-H motif DNA-binding region spans 23-42 (QSAVAKRLGLPSVKAHRLIA).

This sequence belongs to the SorC transcriptional regulatory family.

Its activity is regulated as follows. Erythritol may act as an inducer, probably by binding to EryD and inhibiting its repressor activity. Represses the expression of the eryABCD operon, which is involved in erythritol catabolism. The polypeptide is Erythritol catabolism regulatory protein EryD (Brucella abortus (strain 2308)).